A 121-amino-acid chain; its full sequence is Large ribosomal subunit protein bL19 (121 aa).

It belongs to the bacterial ribosomal protein bL19 family.

This protein is located at the 30S-50S ribosomal subunit interface and may play a role in the structure and function of the aminoacyl-tRNA binding site. The polypeptide is Large ribosomal subunit protein bL19 (Mesomycoplasma hyopneumoniae (strain 7448) (Mycoplasma hyopneumoniae)).